Reading from the N-terminus, the 303-residue chain is METVRIATRKSPLALWQSEHVADRLRQAHPGLHVELVPMSTRGDEVLDRSLAAIGGKGLFLKELELAMLRGEADCAVHSLKDVPMELDEPFALPAMLTRHDPADGFVSNLYASLDALPIGARVGTSSLRRQAQLRALRPDLQLLDLRGNVNTRLAKLDNGGYDAIVLAVAGLERLGLGERIVARLQPPQWLPAPAQGAVAVECDGSNARLMALFAGLDDAATRACVEAERAMNRALHGSCHVPVAAIAQWQGQDLHLQGLVGSASDGRAVRAEAVGPASDPEVLGQRVAKMLLDAGAGELLNV.

S-(dipyrrolylmethanemethyl)cysteine is present on Cys-240.

Belongs to the HMBS family. As to quaternary structure, monomer. The cofactor is dipyrromethane.

It catalyses the reaction 4 porphobilinogen + H2O = hydroxymethylbilane + 4 NH4(+). It participates in porphyrin-containing compound metabolism; protoporphyrin-IX biosynthesis; coproporphyrinogen-III from 5-aminolevulinate: step 2/4. Its function is as follows. Tetrapolymerization of the monopyrrole PBG into the hydroxymethylbilane pre-uroporphyrinogen in several discrete steps. The sequence is that of Porphobilinogen deaminase from Stenotrophomonas maltophilia (strain R551-3).